The following is a 201-amino-acid chain: Peptidyl-tRNA hydrolase (201 aa).

Tyrosine 15 is a tRNA binding site. Histidine 20 functions as the Proton acceptor in the catalytic mechanism. Tyrosine 66, asparagine 68, and asparagine 114 together coordinate tRNA.

Belongs to the PTH family. In terms of assembly, monomer.

It localises to the cytoplasm. The enzyme catalyses an N-acyl-L-alpha-aminoacyl-tRNA + H2O = an N-acyl-L-amino acid + a tRNA + H(+). Functionally, hydrolyzes ribosome-free peptidyl-tRNAs (with 1 or more amino acids incorporated), which drop off the ribosome during protein synthesis, or as a result of ribosome stalling. Catalyzes the release of premature peptidyl moieties from peptidyl-tRNA molecules trapped in stalled 50S ribosomal subunits, and thus maintains levels of free tRNAs and 50S ribosomes. In Burkholderia mallei (strain ATCC 23344), this protein is Peptidyl-tRNA hydrolase.